Here is a 721-residue protein sequence, read N- to C-terminus: MPLDIEELLRKKKAADTAAAKPRFIPKAERERLAAEKAKKEEDDKKRKASEEEQKRKEEEQKWRSNGSSRPNESNGSGRVPTGPRSMNDGRDDRERDRDRDQGRGRVRGKDRKGDKQGVGADKQSAEDIEATLLRSRYLGPQVNQQSNFSAKKKRMRTTEKKFNFEWDADEDTSRDNDPLYDRQTAVSHNGSFAGIGGEFDDGAEERARKRAKMIAQRDPENGKERAEGIMEDFFRARDKARQRADRRGLGKHWSEKSLDDMRERDWRIFKEDFGIATKGGMIPNPMRSWQESNLPQRLLNIVDDVGYKDPSPIQRAAIPIALQARDLIGVAVTGSGKTAAFLLPLLVYISDLPPLDEINKHDGPYALIMAPTRELVQQIETEARKFAGPLGFRVVSIVGGHQIEEQAYNLRDGAEIVVATPGRLLDCIERRLLVLSQCCYVIMDEADRMIDLGFEESVNKILDALPVTNEKPDTDEAENAQIMQRYLGGRDRYRQTMMYTATMPPLVERIAKKYLRRPAIVTIGNAGEAVDTVEQRVEFVSGEDRRKKRLQEILSSGNFGPPIIVFVNIKRNCDAVARDIKQMGWSAVTLHGSKTQEQREAALGSVRAGHTQVLVATDLAGRGIDVPDVSLVVNFNMATNIESYTHRIGRTGRAGKSGVAITFLGPEDHETMYDLKQILSKSSISKVPEELRRHEAAQSKPVRGAKKDKDEGSGKGNWQH.

A disordered region spans residues 12–134 (KKAADTAAAK…SAEDIEATLL (123 aa)). A compositionally biased stretch (basic and acidic residues) spans 26–63 (PKAERERLAAEKAKKEEDDKKRKASEEEQKRKEEEQKW). Positions 64–77 (RSNGSSRPNESNGS) are enriched in polar residues. Positions 88–104 (NDGRDDRERDRDRDQGR) are enriched in basic and acidic residues. The short motif at 288 to 316 (RSWQESNLPQRLLNIVDDVGYKDPSPIQR) is the Q motif element. The region spanning 319 to 522 (IPIALQARDL…KKYLRRPAIV (204 aa)) is the Helicase ATP-binding domain. 332 to 339 (AVTGSGKT) contributes to the ATP binding site. The DEAD box motif lies at 445–448 (DEAD). A Helicase C-terminal domain is found at 533–696 (TVEQRVEFVS…KVPEELRRHE (164 aa)). The tract at residues 685 to 721 (ISKVPEELRRHEAAQSKPVRGAKKDKDEGSGKGNWQH) is disordered. A compositionally biased stretch (basic and acidic residues) spans 688–698 (VPEELRRHEAA).

It belongs to the DEAD box helicase family. DDX23/PRP28 subfamily. In terms of assembly, component of the U5 snRNP complex.

It is found in the cytoplasm. The protein localises to the nucleus. The enzyme catalyses ATP + H2O = ADP + phosphate + H(+). Its function is as follows. ATP-dependent RNA helicase involved in mRNA splicing. May destabilize the U1/5'-splice site duplex to permit an effective competition for the 5'-splice site by the U6 snRNA, resulting in the switch between U1 and U6 at the 5'-splice site. May also act to unwind the U4/U6 base-pairing interaction in the U4/U6/U5 snRNP, facilitating the first covalent step of splicing. The protein is Pre-mRNA-splicing ATP-dependent RNA helicase PRP28 (PRP28) of Gibberella zeae (strain ATCC MYA-4620 / CBS 123657 / FGSC 9075 / NRRL 31084 / PH-1) (Wheat head blight fungus).